Here is a 146-residue protein sequence, read N- to C-terminus: Ribosome maturation factor RimP (146 aa).

It belongs to the RimP family.

It localises to the cytoplasm. Functionally, required for maturation of 30S ribosomal subunits. The protein is Ribosome maturation factor RimP of Helicobacter pylori (strain G27).